A 202-amino-acid polypeptide reads, in one-letter code: Keratin-associated protein 5-10 (202 aa).

A run of 7 repeats spans residues 48 to 51 (CCKP), 54 to 57 (CCVP), 144 to 147 (CCKP), 162 to 165 (CCNP), 172 to 175 (CCVP), 182 to 185 (CCKP), and 192 to 195 (CCVP). Residues 48 to 195 (CCKPVCCCVP…CCCQSSCCVP (148 aa)) form a 7 X 4 AA repeats of C-C-X-P region.

Belongs to the KRTAP type 5 family. As to quaternary structure, interacts with hair keratins. As to expression, expressed in hair root but not in skin. Expressed also in brain and skeletal muscle.

Functionally, in the hair cortex, hair keratin intermediate filaments are embedded in an interfilamentous matrix, consisting of hair keratin-associated protein (KRTAP), which are essential for the formation of a rigid and resistant hair shaft through their extensive disulfide bond cross-linking with abundant cysteine residues of hair keratins. The matrix proteins include the high-sulfur and high-glycine-tyrosine keratins. The sequence is that of Keratin-associated protein 5-10 (KRTAP5-10) from Homo sapiens (Human).